The primary structure comprises 264 residues: Cytosolic Fe-S cluster assembly factor Nubp2 homolog (264 aa).

14-21 (GKGGVGKS) is an ATP binding site. [4Fe-4S] cluster is bound by residues Cys188 and Cys191.

Belongs to the Mrp/NBP35 ATP-binding proteins family. NUBP2/CFD1 subfamily. As to quaternary structure, heterotetramer of 2 Nubp1 and 2 Nubp2 chains. Requires [4Fe-4S] cluster as cofactor.

It localises to the cytoplasm. Its function is as follows. Component of the cytosolic iron-sulfur (Fe/S) protein assembly (CIA) machinery. Required for maturation of extramitochondrial Fe-S proteins. The Nubp1-Nubp2 heterotetramer forms a Fe-S scaffold complex, mediating the de novo assembly of an Fe-S cluster and its transfer to target apoproteins. This chain is Cytosolic Fe-S cluster assembly factor Nubp2 homolog, found in Drosophila grimshawi (Hawaiian fruit fly).